A 159-amino-acid polypeptide reads, in one-letter code: Putative pre-16S rRNA nuclease (159 aa).

This sequence belongs to the YqgF nuclease family.

It localises to the cytoplasm. Could be a nuclease involved in processing of the 5'-end of pre-16S rRNA. This chain is Putative pre-16S rRNA nuclease, found in Synechococcus sp. (strain JA-3-3Ab) (Cyanobacteria bacterium Yellowstone A-Prime).